The primary structure comprises 1503 residues: Dynein axonemal assembly factor 1 homolog (1503 aa).

LRR repeat units lie at residues 34–56, 57–78, 79–100, 101–122, 125–146, and 150–171; these read RLNDVLYLHYQGFQCIENLEEYT, ELKCLWLECNAISEIQGLEKLG, KLKCLFLQNNLITKIENLDPCR, ELDTLNLSSNHIRKIQNIGTNI, VLNTLTIASNYLKDSDSLSDLI, and TLSVLDLSNNRIDDILIVKIFE. The LRRCT domain maps to 185-223; it reads PVVSRLPQYRKTLILACKELTYLDSRPVFPRDRACAEAW. 4 disordered regions span residues 249–280, 305–328, 956–1033, and 1295–1315; these read SINCTIRMRNSHRPPDQQDPLLRSSDSEDDTC, EQPISDHGTSTSSSVEDKDGTSSQ, DSGD…DHDE, and STNNHSFSTKKTLPTKTSTSE. Residues 973–985 show a composition bias toward acidic residues; it reads TESEDYDTAEDEY. The segment covering 1014-1031 has biased composition (basic and acidic residues); it reads QKQDKPDTVEEVGKKNDH. The segment covering 1303-1314 has biased composition (low complexity); it reads TKKTLPTKTSTS.

The protein belongs to the DNAAF1 family.

It is found in the cell projection. It localises to the cilium. Cilium-specific protein required for cilia structures. The polypeptide is Dynein axonemal assembly factor 1 homolog (dtr) (Drosophila erecta (Fruit fly)).